Here is a 146-residue protein sequence, read N- to C-terminus: Pre-mRNA-splicing factor cwf14 (146 aa).

It belongs to the BUD31 (G10) family. In terms of assembly, belongs to the 40S cdc5-associated complex (or cwf complex), a spliceosome sub-complex reminiscent of a late-stage spliceosome composed of the U2, U5 and U6 snRNAs and at least brr2, cdc5, cwf2/prp3, cwf3/syf1, cwf4/syf3, cwf5/ecm2, spp42/cwf6, cwf7/spf27, cwf8, cwf9, cwf10, cwf11, cwf12, prp45/cwf13, cwf14, cwf15, cwf16, cwf17, cwf18, cwf19, cwf20, cwf21, cwf22, cwf23, cwf24, cwf25, cwf26, cyp7/cwf27, cwf28, cwf29/ist3, lea1, msl1, prp5/cwf1, prp10, prp12/sap130, prp17, prp22, sap61, sap62, sap114, sap145, slu7, smb1, smd1, smd3, smf1, smg1 and syf2.

Its subcellular location is the nucleus. Its function is as follows. Involved in mRNA splicing where it associates with cdc5 and the other cwf proteins as part of the spliceosome. This Schizosaccharomyces pombe (strain 972 / ATCC 24843) (Fission yeast) protein is Pre-mRNA-splicing factor cwf14 (cwf14).